We begin with the raw amino-acid sequence, 138 residues long: UPF0201 protein TK1335 (138 aa).

Belongs to the UPF0201 family.

The chain is UPF0201 protein TK1335 from Thermococcus kodakarensis (strain ATCC BAA-918 / JCM 12380 / KOD1) (Pyrococcus kodakaraensis (strain KOD1)).